Here is a 461-residue protein sequence, read N- to C-terminus: Argininosuccinate lyase (461 aa).

Belongs to the lyase 1 family. Argininosuccinate lyase subfamily.

It localises to the cytoplasm. The enzyme catalyses 2-(N(omega)-L-arginino)succinate = fumarate + L-arginine. It participates in amino-acid biosynthesis; L-arginine biosynthesis; L-arginine from L-ornithine and carbamoyl phosphate: step 3/3. The chain is Argininosuccinate lyase from Dehalococcoides mccartyi (strain ATCC BAA-2266 / KCTC 15142 / 195) (Dehalococcoides ethenogenes (strain 195)).